We begin with the raw amino-acid sequence, 284 residues long: Tropomyosin beta chain (284 aa).

The residue at position 1 (Met1) is an N-acetylmethionine. Residues 1–78 form a disordered region; it reads MDAIKKKMQM…EKLEQAEKKA (78 aa). The stretch at 1–284 forms a coiled coil; the sequence is MDAIKKKMQM…DNALNDITSL (284 aa). 2 stretches are compositionally biased toward basic and acidic residues: residues 12–40 and 51–78; these read KLDK…KQLE and KGTE…EKKA. Thr53 carries the post-translational modification Phosphothreonine. Ser61 is subject to Phosphoserine; by PIK3CG. Position 79 is a phosphothreonine (Thr79). A Phosphoserine modification is found at Ser87. Residue Thr108 is modified to Phosphothreonine. Residues 117 to 136 form a disordered region; that stretch reads EKAADESERGMKVIENRAMK. Ser158, Ser206, and Ser215 each carry phosphoserine. A Phosphothreonine modification is found at Thr252. Phosphotyrosine is present on Tyr261. Phosphoserine is present on Ser271. The residue at position 282 (Thr282) is a Phosphothreonine. Position 283 is a phosphoserine (Ser283).

The protein belongs to the tropomyosin family. In terms of assembly, homodimer. Heterodimer of an alpha (TPM1, TPM3 or TPM4) and a beta (TPM2) chain. Post-translationally, phosphorylated on Ser-61 by PIK3CG. Phosphorylation on Ser-61 is required for ADRB2 internalization.

The protein localises to the cytoplasm. It is found in the cytoskeleton. Binds to actin filaments in muscle and non-muscle cells. Plays a central role, in association with the troponin complex, in the calcium dependent regulation of vertebrate striated muscle contraction. Smooth muscle contraction is regulated by interaction with caldesmon. In non-muscle cells is implicated in stabilizing cytoskeleton actin filaments. The non-muscle isoform may have a role in agonist-mediated receptor internalization. The polypeptide is Tropomyosin beta chain (Tpm2) (Mus musculus (Mouse)).